Consider the following 1194-residue polypeptide: Cohesin subunit SA-2 (1194 aa).

The 86-residue stretch at 224-309 (FVHRYRDAIA…SRFKDRIVSM (86 aa)) folds into the SCD domain. The tract at residues 986-1027 (DTMSVMSGMSGRGSSTRSKKIKPPTGKRKLPEAEESSSSDSM) is disordered. The segment covering 988–1001 (MSVMSGMSGRGSST) has biased composition (low complexity). Basic residues predominate over residues 1002–1013 (RSKKIKPPTGKR).

The protein belongs to the SCC3 family. As to quaternary structure, part of the cohesin complex which is composed of a heterodimer between a SMC1 protein (SMC1A or SMC1B) and SMC3, which are attached via their hinge domain, and RAD21 which link them at their heads, and one STAG protein (STAG1, STAG2 or STAG3). In cohesin complexes, STAG2 is mutually exclusive with STAG1 and STAG3. Interacts directly with RAD21 in cohesin complex. In terms of processing, phosphorylated by PLK1. The large dissociation of cohesin from chromosome arms during prophase is partly due to its phosphorylation.

The protein localises to the nucleus. It is found in the chromosome. Its subcellular location is the centromere. In terms of biological role, component of cohesin complex, a complex required for the cohesion of sister chromatids after DNA replication. The cohesin complex apparently forms a large proteinaceous ring within which sister chromatids can be trapped. At anaphase, the complex is cleaved and dissociates from chromatin, allowing sister chromatids to segregate. The cohesin complex may also play a role in spindle pole assembly during mitosis. In Xenopus laevis (African clawed frog), this protein is Cohesin subunit SA-2 (stag2).